Consider the following 196-residue polypeptide: Holliday junction resolvase RecU (196 aa).

Mg(2+)-binding residues include threonine 82, aspartate 84, glutamate 97, and glutamine 116.

The protein belongs to the RecU family. Requires Mg(2+) as cofactor.

The protein localises to the cytoplasm. It carries out the reaction Endonucleolytic cleavage at a junction such as a reciprocal single-stranded crossover between two homologous DNA duplexes (Holliday junction).. Endonuclease that resolves Holliday junction intermediates in genetic recombination. Cleaves mobile four-strand junctions by introducing symmetrical nicks in paired strands. Promotes annealing of linear ssDNA with homologous dsDNA. Required for DNA repair, homologous recombination and chromosome segregation. The protein is Holliday junction resolvase RecU of Oceanobacillus iheyensis (strain DSM 14371 / CIP 107618 / JCM 11309 / KCTC 3954 / HTE831).